Consider the following 247-residue polypeptide: Acetoacetate decarboxylase 1 (247 aa).

The active-site Schiff-base intermediate with acetoacetate is Lys-116.

It belongs to the ADC family.

The enzyme catalyses acetoacetate + H(+) = acetone + CO2. In terms of biological role, catalyzes the conversion of acetoacetate to acetone and carbon dioxide. The protein is Acetoacetate decarboxylase 1 of Mesorhizobium japonicum (strain LMG 29417 / CECT 9101 / MAFF 303099) (Mesorhizobium loti (strain MAFF 303099)).